Consider the following 534-residue polypeptide: Protein BFR2 (534 aa).

Residues 27 to 148 (ENASLFQHNE…ETEEAQQKRH (122 aa)) form a disordered region. Phosphoserine is present on residues S41 and S44. The span at 52–77 (EETKKAHYLEVEKSKLRAEKGLELND) shows a compositional bias: basic and acidic residues. Residues 86–161 (SRQALYEEVS…KLIQQETKQA (76 aa)) adopt a coiled-coil conformation. 2 stretches are compositionally biased toward acidic residues: residues 93–114 (EVSE…EEDA) and 121–142 (SEDE…ETEE). Residues S366, S372, and S379 each carry the phosphoserine modification.

The protein belongs to the AATF family.

It is found in the nucleus. Its subcellular location is the nucleolus. Functionally, involved in endoplasmic reticulum to Golgi transport. Involved in a protein-transport step blocked by brefeldin A, which disrupts the Golgi apparatus and its incoming protein flux. May also be involved for mass growth or cell proliferation. The polypeptide is Protein BFR2 (BFR2) (Saccharomyces cerevisiae (strain ATCC 204508 / S288c) (Baker's yeast)).